The following is a 337-amino-acid chain: Structural protein VP9 (337 aa).

The protein resides in the virion. It is found in the host cytoplasm. The sequence is that of Structural protein VP9 from Colorado tick fever virus (strain USA/Florio N-7180) (CTFV).